Reading from the N-terminus, the 174-residue chain is Pituitary tumor-transforming gene 1 protein-interacting protein (174 aa).

An N-terminal signal peptide occupies residues 1-29; it reads MAPANLGLTPHWVMLLGAVLLLLLSGASA. Over 30–93 the chain is Extracellular; that stretch reads QEPPRVGCSE…RWGVCWVNFE (64 aa). The PSI domain occupies 36–89; it reads GCSEYTNRSCEECLRNVSCLWCNENKACMDYPVRKILPPASLCKLSSARWGVCW. Residues Asn42 and Asn51 are each glycosylated (N-linked (GlcNAc...) asparagine). The chain crosses the membrane as a helical span at residues 94–114; that stretch reads ALIITMSVLGGSVLLGITVCC. Residues 115-174 lie on the Cytoplasmic side of the membrane; it reads CYCCRRKKSRKPDKSDERAMREQEERRVRQEERRAEMKSRHDEIRKKYGLFKEQNPYEKF. A disordered region spans residues 125 to 155; it reads KPDKSDERAMREQEERRVRQEERRAEMKSRH. The span at 126 to 155 shows a compositional bias: basic and acidic residues; the sequence is PDKSDERAMREQEERRVRQEERRAEMKSRH. A coiled-coil region spans residues 127 to 163; it reads DKSDERAMREQEERRVRQEERRAEMKSRHDEIRKKYG. Tyr171 carries the post-translational modification Phosphotyrosine.

Interacts with PTTG1.

It localises to the cell membrane. Its subcellular location is the cytoplasm. It is found in the nucleus. Functionally, may facilitate PTTG1 nuclear translocation. The protein is Pituitary tumor-transforming gene 1 protein-interacting protein (Pttg1ip) of Mus musculus (Mouse).